Consider the following 406-residue polypeptide: Coenzyme A biosynthesis bifunctional protein CoaBC (406 aa).

A phosphopantothenoylcysteine decarboxylase region spans residues 2–190 (SLAGKKIVLG…SPVNDLKHLN (189 aa)). The active-site Proton donor is the Cys-158. The interval 191 to 406 (IMITAGPTRE…VTRYDEKNRR (216 aa)) is phosphopantothenate--cysteine ligase. CTP-binding positions include 273 to 275 (GCA), Asp-279, Lys-289, 308 to 311 (PDIV), Phe-327, Lys-341, and Lys-345.

It in the N-terminal section; belongs to the HFCD (homo-oligomeric flavin containing Cys decarboxylase) superfamily. The protein in the C-terminal section; belongs to the PPC synthetase family. Mg(2+) is required as a cofactor. FMN serves as cofactor.

It carries out the reaction N-[(R)-4-phosphopantothenoyl]-L-cysteine + H(+) = (R)-4'-phosphopantetheine + CO2. It catalyses the reaction (R)-4'-phosphopantothenate + L-cysteine + CTP = N-[(R)-4-phosphopantothenoyl]-L-cysteine + CMP + diphosphate + H(+). It participates in cofactor biosynthesis; coenzyme A biosynthesis; CoA from (R)-pantothenate: step 2/5. It functions in the pathway cofactor biosynthesis; coenzyme A biosynthesis; CoA from (R)-pantothenate: step 3/5. Its function is as follows. Catalyzes two sequential steps in the biosynthesis of coenzyme A. In the first step cysteine is conjugated to 4'-phosphopantothenate to form 4-phosphopantothenoylcysteine. In the second step the latter compound is decarboxylated to form 4'-phosphopantotheine. In Escherichia coli O6:H1 (strain CFT073 / ATCC 700928 / UPEC), this protein is Coenzyme A biosynthesis bifunctional protein CoaBC.